We begin with the raw amino-acid sequence, 416 residues long: Kynureninase (416 aa).

Pyridoxal 5'-phosphate contacts are provided by residues Thr97, Ser98, 129 to 132 (FPTD), Thr172, Asp201, His204, and Tyr226. N6-(pyridoxal phosphate)lysine is present on Lys227. Pyridoxal 5'-phosphate is bound by residues Trp256 and Thr282.

This sequence belongs to the kynureninase family. In terms of assembly, homodimer. Pyridoxal 5'-phosphate is required as a cofactor.

It catalyses the reaction L-kynurenine + H2O = anthranilate + L-alanine + H(+). The enzyme catalyses 3-hydroxy-L-kynurenine + H2O = 3-hydroxyanthranilate + L-alanine + H(+). It functions in the pathway amino-acid degradation; L-kynurenine degradation; L-alanine and anthranilate from L-kynurenine: step 1/1. The protein operates within cofactor biosynthesis; NAD(+) biosynthesis; quinolinate from L-kynurenine: step 2/3. In terms of biological role, catalyzes the cleavage of L-kynurenine (L-Kyn) and L-3-hydroxykynurenine (L-3OHKyn) into anthranilic acid (AA) and 3-hydroxyanthranilic acid (3-OHAA), respectively. The chain is Kynureninase from Pseudomonas fluorescens.